A 131-amino-acid polypeptide reads, in one-letter code: Glycine cleavage system H protein (131 aa).

The Lipoyl-binding domain maps to I24–R106. Residue K65 is modified to N6-lipoyllysine.

The protein belongs to the GcvH family. In terms of assembly, the glycine cleavage system is composed of four proteins: P, T, L and H. Requires (R)-lipoate as cofactor.

Its function is as follows. The glycine cleavage system catalyzes the degradation of glycine. The H protein shuttles the methylamine group of glycine from the P protein to the T protein. The sequence is that of Glycine cleavage system H protein from Microcystis aeruginosa (strain NIES-843 / IAM M-2473).